Consider the following 77-residue polypeptide: Small ribosomal subunit protein bS20 (77 aa).

The protein belongs to the bacterial ribosomal protein bS20 family.

Its function is as follows. Binds directly to 16S ribosomal RNA. In Lactococcus lactis subsp. lactis (strain IL1403) (Streptococcus lactis), this protein is Small ribosomal subunit protein bS20.